Reading from the N-terminus, the 150-residue chain is 5-hydroxytryptamine receptor 1B (150 aa).

Residues 1-83 (VEARSRILKQ…AARERKATKT (83 aa)) lie on the Extracellular side of the membrane. The span at 27–40 (DSPGSTSSVTSINS) shows a compositional bias: polar residues. Residues 27 to 50 (DSPGSTSSVTSINSRAPDLPSESG) are disordered. The helical transmembrane segment at 84 to 105 (LGIILGAFIVCWLPFFIISLAM) threads the bilayer. Residues 106 to 115 (PICKDACWFH) lie on the Cytoplasmic side of the membrane. Residues 116–138 (LAIFDFFTWLGYLNSLINPIIYT) form a helical membrane-spanning segment. The short motif at 133–137 (NPIIY) is the NPxxY motif; important for ligand-induced conformation changes and signaling element. The Extracellular segment spans residues 139–150 (MFNEDFKQAFHK).

Belongs to the G-protein coupled receptor 1 family. Homodimer. Heterodimer with HTR1D. Post-translationally, phosphorylated. Desensitization of the receptor may be mediated by its phosphorylation. In terms of processing, palmitoylated.

It localises to the cell membrane. Functionally, G-protein coupled receptor for 5-hydroxytryptamine (serotonin). Also functions as a receptor for ergot alkaloid derivatives, various anxiolytic and antidepressant drugs and other psychoactive substances, such as lysergic acid diethylamide (LSD). Ligand binding causes a conformation change that triggers signaling via guanine nucleotide-binding proteins (G proteins) and modulates the activity of downstream effectors, such as adenylate cyclase. HTR1B is coupled to G(i)/G(o) G alpha proteins and mediates inhibitory neurotransmission by inhibiting adenylate cyclase activity. Arrestin family members inhibit signaling via G proteins and mediate activation of alternative signaling pathways. Regulates the release of 5-hydroxytryptamine, dopamine and acetylcholine in the brain, and thereby affects neural activity, nociceptive processing, pain perception, mood and behavior. Besides, plays a role in vasoconstriction of cerebral arteries. In Sus scrofa (Pig), this protein is 5-hydroxytryptamine receptor 1B (HTR1B).